Reading from the N-terminus, the 227-residue chain is Cytochrome c oxidase subunit 2 (227 aa).

At 1-14 (MAYPFQLGLQDATS) the chain is on the mitochondrial intermembrane side. A helical membrane pass occupies residues 15–45 (PIMEELMNFHDHTLMIVFLISSLVLYIISLM). The Mitochondrial matrix portion of the chain corresponds to 46 to 59 (LTTKLTHTSTMDAQ). Residues 60–87 (EVETIWTILPAAILILIALPSLRILYMM) traverse the membrane as a helical segment. The Mitochondrial intermembrane segment spans residues 88–227 (DEINNPVLTV…YFENWSASMI (140 aa)). Residues His-161, Cys-196, Glu-198, Cys-200, His-204, and Met-207 each contribute to the Cu cation site. Glu-198 provides a ligand contact to Mg(2+).

The protein belongs to the cytochrome c oxidase subunit 2 family. Component of the cytochrome c oxidase (complex IV, CIV), a multisubunit enzyme composed of 14 subunits. The complex is composed of a catalytic core of 3 subunits MT-CO1, MT-CO2 and MT-CO3, encoded in the mitochondrial DNA, and 11 supernumerary subunits COX4I, COX5A, COX5B, COX6A, COX6B, COX6C, COX7A, COX7B, COX7C, COX8 and NDUFA4, which are encoded in the nuclear genome. The complex exists as a monomer or a dimer and forms supercomplexes (SCs) in the inner mitochondrial membrane with NADH-ubiquinone oxidoreductase (complex I, CI) and ubiquinol-cytochrome c oxidoreductase (cytochrome b-c1 complex, complex III, CIII), resulting in different assemblies (supercomplex SCI(1)III(2)IV(1) and megacomplex MCI(2)III(2)IV(2)). Found in a complex with TMEM177, COA6, COX18, COX20, SCO1 and SCO2. Interacts with TMEM177 in a COX20-dependent manner. Interacts with COX20. Interacts with COX16. The cofactor is Cu cation.

The protein localises to the mitochondrion inner membrane. The enzyme catalyses 4 Fe(II)-[cytochrome c] + O2 + 8 H(+)(in) = 4 Fe(III)-[cytochrome c] + 2 H2O + 4 H(+)(out). Functionally, component of the cytochrome c oxidase, the last enzyme in the mitochondrial electron transport chain which drives oxidative phosphorylation. The respiratory chain contains 3 multisubunit complexes succinate dehydrogenase (complex II, CII), ubiquinol-cytochrome c oxidoreductase (cytochrome b-c1 complex, complex III, CIII) and cytochrome c oxidase (complex IV, CIV), that cooperate to transfer electrons derived from NADH and succinate to molecular oxygen, creating an electrochemical gradient over the inner membrane that drives transmembrane transport and the ATP synthase. Cytochrome c oxidase is the component of the respiratory chain that catalyzes the reduction of oxygen to water. Electrons originating from reduced cytochrome c in the intermembrane space (IMS) are transferred via the dinuclear copper A center (CU(A)) of subunit 2 and heme A of subunit 1 to the active site in subunit 1, a binuclear center (BNC) formed by heme A3 and copper B (CU(B)). The BNC reduces molecular oxygen to 2 water molecules using 4 electrons from cytochrome c in the IMS and 4 protons from the mitochondrial matrix. This chain is Cytochrome c oxidase subunit 2 (MT-CO2), found in Leggadina forresti (Forrest's mouse).